The primary structure comprises 447 residues: Cytochrome c biogenesis protein CcsB (447 aa).

A run of 3 helical transmembrane segments spans residues 28–48 (LRLA…GTVI), 87–107 (TWWY…CTFR), and 173–193 (IGPI…IWGA).

Belongs to the Ccs1/CcsB family. May interact with CcsA.

It is found in the cellular thylakoid membrane. Required during biogenesis of c-type cytochromes (cytochrome c6 and cytochrome f) at the step of heme attachment. The polypeptide is Cytochrome c biogenesis protein CcsB (Microcystis aeruginosa (strain NIES-843 / IAM M-2473)).